A 441-amino-acid polypeptide reads, in one-letter code: Phosphoribosylamine--glycine ligase (441 aa).

The ATP-grasp domain occupies 112 to 319 (RNFMKKYGIE…FTEIMSAVVK (208 aa)). 139 to 196 (IEKLGDVAVKPSGLTGGKGVKVMGDQLPDLKAAKDYTSELLEKGPVVIEERFIGEEFT) is an ATP binding site. Mg(2+) is bound by residues glutamine 277, glutamate 289, and asparagine 291. Mn(2+) contacts are provided by glutamine 277, glutamate 289, and asparagine 291.

This sequence belongs to the GARS family. Mg(2+) serves as cofactor. It depends on Mn(2+) as a cofactor.

It catalyses the reaction 5-phospho-beta-D-ribosylamine + glycine + ATP = N(1)-(5-phospho-beta-D-ribosyl)glycinamide + ADP + phosphate + H(+). It participates in purine metabolism; IMP biosynthesis via de novo pathway; N(1)-(5-phospho-D-ribosyl)glycinamide from 5-phospho-alpha-D-ribose 1-diphosphate: step 2/2. The sequence is that of Phosphoribosylamine--glycine ligase from Methanosarcina acetivorans (strain ATCC 35395 / DSM 2834 / JCM 12185 / C2A).